We begin with the raw amino-acid sequence, 483 residues long: Putative (R)-citramalate synthase CimA (483 aa).

One can recognise a Pyruvate carboxyltransferase domain in the interval 1 to 245; sequence MRDGEQTPGV…DTGIKHEQIY (245 aa).

Belongs to the alpha-IPM synthase/homocitrate synthase family. As to quaternary structure, homodimer.

The catalysed reaction is pyruvate + acetyl-CoA + H2O = (3R)-citramalate + CoA + H(+). The protein operates within amino-acid biosynthesis; L-isoleucine biosynthesis; 2-oxobutanoate from pyruvate: step 1/3. Its function is as follows. Catalyzes the condensation of pyruvate and acetyl-coenzyme A to form (R)-citramalate. The sequence is that of Putative (R)-citramalate synthase CimA from Methanosarcina acetivorans (strain ATCC 35395 / DSM 2834 / JCM 12185 / C2A).